The chain runs to 186 residues: Elongation factor P (186 aa).

Belongs to the elongation factor P family.

The protein localises to the cytoplasm. The protein operates within protein biosynthesis; polypeptide chain elongation. In terms of biological role, involved in peptide bond synthesis. Stimulates efficient translation and peptide-bond synthesis on native or reconstituted 70S ribosomes in vitro. Probably functions indirectly by altering the affinity of the ribosome for aminoacyl-tRNA, thus increasing their reactivity as acceptors for peptidyl transferase. This chain is Elongation factor P, found in Streptococcus thermophilus (strain CNRZ 1066).